The chain runs to 413 residues: Na(+)-translocating NADH-quinone reductase subunit B (413 aa).

The next 3 helical transmembrane spans lie at 56-76 (MMIL…YNVG), 123-143 (LLGA…GGFW), and 169-189 (IVPP…GVVI). Thr236 bears the FMN phosphoryl threonine mark. The next 5 helical transmembrane spans lie at 270-290 (GSIG…IIFG), 297-317 (IVAG…WIGS), 322-342 (LFAM…GMIF), 358-378 (WWYG…NPAY), and 381-401 (GMML…YVVV).

The protein belongs to the NqrB/RnfD family. Composed of six subunits; NqrA, NqrB, NqrC, NqrD, NqrE and NqrF. FMN is required as a cofactor.

It is found in the cell inner membrane. It carries out the reaction a ubiquinone + n Na(+)(in) + NADH + H(+) = a ubiquinol + n Na(+)(out) + NAD(+). In terms of biological role, NQR complex catalyzes the reduction of ubiquinone-1 to ubiquinol by two successive reactions, coupled with the transport of Na(+) ions from the cytoplasm to the periplasm. NqrA to NqrE are probably involved in the second step, the conversion of ubisemiquinone to ubiquinol. This is Na(+)-translocating NADH-quinone reductase subunit B from Yersinia pestis.